Reading from the N-terminus, the 479-residue chain is Cysteine protease effector 1 (479 aa).

The chain is Cysteine protease effector 1 from Escherichia coli O1:K1:H7 (strain ATCC 11775 / DSM 30083 / JCM 1649 / NBRC 102203 / NCTC 9001 / U5/41).